The primary structure comprises 735 residues: Catalase-peroxidase (735 aa).

Polar residues-rich tracts occupy residues 1 to 10 (MENQNRQNAA) and 17 to 26 (SVTNQSSNRT). The interval 1–30 (MENQNRQNAAQCPFHGSVTNQSSNRTTNKD) is disordered. Positions 100 to 223 (WHSAGTYRIG…LAAVQMGLIY (124 aa)) form a cross-link, tryptophyl-tyrosyl-methioninium (Trp-Tyr) (with M-249). The active-site Proton acceptor is His-101. Residues 223–249 (YVNPEGPDGKPDPKAAARDIRETFRRM) constitute a cross-link (tryptophyl-tyrosyl-methioninium (Tyr-Met) (with W-100)). His-264 contributes to the heme b binding site.

This sequence belongs to the peroxidase family. Peroxidase/catalase subfamily. In terms of assembly, homodimer or homotetramer. Heme b is required as a cofactor. Post-translationally, formation of the three residue Trp-Tyr-Met cross-link is important for the catalase, but not the peroxidase activity of the enzyme.

The catalysed reaction is H2O2 + AH2 = A + 2 H2O. It carries out the reaction 2 H2O2 = O2 + 2 H2O. In terms of biological role, bifunctional enzyme with both catalase and broad-spectrum peroxidase activity. Also displays NADH oxidase, INH lyase and isonicotinoyl-NAD synthase activities. The protein is Catalase-peroxidase of Geobacillus stearothermophilus (Bacillus stearothermophilus).